The chain runs to 592 residues: Mitochondrial-type heat shock protein 70 (592 aa).

This sequence belongs to the heat shock protein 70 family.

The protein resides in the nucleus. Functionally, may act as a chaperone. This chain is Mitochondrial-type heat shock protein 70 (HSP70), found in Encephalitozoon cuniculi (strain GB-M1) (Microsporidian parasite).